Reading from the N-terminus, the 400-residue chain is Plasminogen activator inhibitor 1 (400 aa).

Residues 1 to 21 form the signal peptide; the sequence is MQMSTVCLALGLALVFGEASA. Asn-230, Asn-286, and Asn-350 each carry an N-linked (GlcNAc...) asparagine glycan.

It belongs to the serpin family. As to quaternary structure, forms a heterodimer with TMPRSS7. Interacts with VTN. Binds LRP1B; binding is followed by internalization and degradation. Interacts with PPP1CB. In complex with PLAU/uPA, interacts with PLAUR/uPAR. Interacts with SORL1 and LRP1, either alone or in complex with PLAU; these interactions are abolished in the presence of LRPAP1/RAP. The ternary complex composed of PLAUR-PLAU-PAI1 also interacts with SORL1. Interacts with PLAT/tPA. Also interacts with SORL1, when complexed to PLAT/tPA.

Its subcellular location is the secreted. In terms of biological role, serine protease inhibitor. Inhibits TMPRSS7. Is a primary inhibitor of tissue-type plasminogen activator (PLAT) and urokinase-type plasminogen activator (PLAU). As PLAT inhibitor, it is required for fibrinolysis down-regulation and is responsible for the controlled degradation of blood clots. As PLAU inhibitor, it is involved in the regulation of cell adhesion and spreading. Acts as a regulator of cell migration, independently of its role as protease inhibitor. It is required for stimulation of keratinocyte migration during cutaneous injury repair. It is involved in cellular and replicative senescence. Plays a role in alveolar type 2 cells senescence in the lung. Is involved in the regulation of cementogenic differentiation of periodontal ligament stem cells, and regulates odontoblast differentiation and dentin formation during odontogenesis. This Neovison vison (American mink) protein is Plasminogen activator inhibitor 1 (SERPINE1).